The sequence spans 460 residues: SPbeta prophage-derived uncharacterized protein YopQ (460 aa).

In Bacillus subtilis (strain 168), this protein is SPbeta prophage-derived uncharacterized protein YopQ (yopQ).